We begin with the raw amino-acid sequence, 1823 residues long: THO complex subunit 2 (1823 aa).

The stretch at 935-1003 (NRYESEISKQ…RRRLSREKDT (69 aa)) forms a coiled coil. Positions 964–969 (KRKKEK) match the Nuclear localization signal motif. 2 disordered regions span residues 1244-1382 (LVGV…KDLN) and 1394-1823 (ALSS…GSRE). Basic and acidic residues-rich tracts occupy residues 1272–1283 (QMLKTKPLDGRT), 1312–1330 (KSMEQKETDETPRISDENP), and 1356–1367 (AKQDFGKDDGKS). The span at 1394–1409 (ALSSTAANGSIATGSS) shows a compositional bias: polar residues. Over residues 1432 to 1596 (PRHEIVTSVR…EKSHPDDHFH (165 aa)) the composition is skewed to basic and acidic residues. Residues 1600–1610 (LPPPPPLPPNI) are compositionally biased toward pro residues. 4 stretches are compositionally biased toward basic and acidic residues: residues 1616–1625 (AAKEDLERRA), 1636–1648 (PRHEEREKRRSEE), 1655–1706 (DDAK…FEAS), and 1768–1785 (LGKEASSKMARRDPDPIA). Phosphoserine occurs at positions 1646 and 1696. Residues 1802–1816 (MTVNGKTTRGEQSGS) are compositionally biased toward polar residues.

Belongs to the THOC2 family. Component of the THO complex, which is composed of THO1, THO2, THO3, THO5, THO6 and THO7.

It localises to the nucleus. Functionally, acts as a component of the THO subcomplex of the TREX complex which is thought to couple mRNA transcription, processing and nuclear export. In Arabidopsis thaliana (Mouse-ear cress), this protein is THO complex subunit 2 (THO2).